The sequence spans 248 residues: Probable transcriptional regulatory protein M446_6579 (248 aa).

This sequence belongs to the TACO1 family.

The protein resides in the cytoplasm. The chain is Probable transcriptional regulatory protein M446_6579 from Methylobacterium sp. (strain 4-46).